A 116-amino-acid chain; its full sequence is Non-specific lipid-transfer protein (116 aa).

A signal peptide spans 1–25 (MAKMAMMVLCAGVTCMVVGAPYTEA). 4 disulfide bridges follow: cysteine 28-cysteine 75, cysteine 38-cysteine 52, cysteine 53-cysteine 98, and cysteine 73-cysteine 112.

It belongs to the plant LTP family.

Its function is as follows. Plant non-specific lipid-transfer proteins transfer phospholipids as well as galactolipids across membranes. May play a role in wax or cutin deposition in the cell walls of expanding epidermal cells and certain secretory tissues. The sequence is that of Non-specific lipid-transfer protein from Helianthus annuus (Common sunflower).